Consider the following 311-residue polypeptide: Ferritin-like catalase Nec2 (311 aa).

The signal sequence occupies residues 1 to 25 (MAFLSNMAMFITMLMFSSMMHPCFS). N-linked (GlcNAc...) asparagine glycosylation is found at Asn-128, Asn-257, and Asn-289.

As to quaternary structure, forms homomultimers. As to expression, observed in all flowers organs; mainly expressed in nectaries and, to a lower extent, in petals and ovules, as well as in stigmas and calyx at low levels.

The catalysed reaction is 2 H2O2 = O2 + 2 H2O. In terms of biological role, involved in the production of blood-red nectar containing the alkaloid nesocodin and that serves as a visual attractant for pollinator visitation, including vertebrates such as Phelsuma geckos. The nectar is initially acidic and pale yellow, but slowly becomes alkaline before turning into red within 24 hours. Together with NEC1 and NEC3, facilitates the condensation of sinapaldehyde ((E)-3,5-dimethoxy-4-hydroxycinnamaldehyde) and proline to form nesocodin, a pigment with a stable imine bond. Protects nesocodin from degradation by hydrogen peroxide H(2)O(2) by catalyzing the degradation of H(2)O(2) into water H(2)O and dioxygene O(2). This chain is Ferritin-like catalase Nec2, found in Nesocodon mauritianus (Blue Mauritius bellflower).